Here is a 614-residue protein sequence, read N- to C-terminus: ATP-dependent zinc metalloprotease FtsH (614 aa).

Residues 1-5 (MLPIR) are Cytoplasmic-facing. A helical transmembrane segment spans residues 6–26 (WFLALLAVFLAVAGLDLWFSQ). Over 27-127 (TGARPSSATG…AVSARERTAS (101 aa)) the chain is Periplasmic. A helical transmembrane segment spans residues 128-148 (IVHAIVHPLGLITLIVGILFV). Topologically, residues 149 to 614 (VQRYAGRFTA…AQHPPSALAG (466 aa)) are cytoplasmic. Residue 214–221 (GPPGTGKT) participates in ATP binding. His-436 contributes to the Zn(2+) binding site. The active site involves Glu-437. His-440 and Asp-513 together coordinate Zn(2+).

In the central section; belongs to the AAA ATPase family. This sequence in the C-terminal section; belongs to the peptidase M41 family. Homohexamer. Zn(2+) serves as cofactor.

It localises to the cell inner membrane. Its function is as follows. Acts as a processive, ATP-dependent zinc metallopeptidase for both cytoplasmic and membrane proteins. Plays a role in the quality control of integral membrane proteins. The sequence is that of ATP-dependent zinc metalloprotease FtsH from Opitutus terrae (strain DSM 11246 / JCM 15787 / PB90-1).